The primary structure comprises 284 residues: 8-methylmenaquinol:fumarate reductase membrane anchor subunit (284 aa).

As to quaternary structure, the MFR complex is composed of three subunits: a flavoprotein (SdhA), an iron-sulfur protein (SdhB), and one hydrophobic anchor protein (SdhE).

It localises to the periplasm. The protein localises to the cell membrane. The enzyme catalyses 8-methylmenaquinone-6 + succinate = 8-methylmenaquinol-6 + fumarate. Its function is as follows. Membrane anchor subunit of 8-methylmenaquinol:fumarate reductase (MFR), that catalyzes the reduction of fumarate using 8-methylmenaquinol-6 as electron donor. The complex shows no succinate oxidation activity. Is involved in anaerobic metabolism. SdhE likely contains the quinol/quinone binding site. This Wolinella succinogenes (strain ATCC 29543 / DSM 1740 / CCUG 13145 / JCM 31913 / LMG 7466 / NCTC 11488 / FDC 602W) (Vibrio succinogenes) protein is 8-methylmenaquinol:fumarate reductase membrane anchor subunit.